We begin with the raw amino-acid sequence, 1885 residues long: Fatty acid synthase subunit alpha (1885 aa).

Basic and acidic residues predominate over residues proline 92–glutamate 107. Residues proline 92 to serine 140 form a disordered region. Residues serine 108 to proline 126 show a composition bias toward low complexity. One can recognise a Carrier domain in the interval valine 146 to glutamine 221. Serine 181 carries the post-translational modification O-(pantetheine 4'-phosphoryl)serine. The Ketosynthase family 3 (KS3) domain occupies isoleucine 1121 to histidine 1661. Active-site for beta-ketoacyl synthase activity residues include cysteine 1304, histidine 1546, and histidine 1587. Positions 1771, 1772, and 1773 each coordinate Mg(2+). Acetyl-CoA contacts are provided by residues aspartate 1771–glutamate 1773, tyrosine 1797, serine 1807, glutamate 1816–serine 1826, arginine 1840–asparagine 1843, and isoleucine 1870–histidine 1872. Positions 1871 and 1872 each coordinate Mg(2+).

The protein belongs to the thiolase-like superfamily. Fungal fatty acid synthetase subunit alpha family. In terms of assembly, [Alpha(6)beta(6)] hexamers of two multifunctional subunits (alpha and beta).

The enzyme catalyses acetyl-CoA + n malonyl-CoA + 2n NADPH + 4n H(+) = a long-chain-acyl-CoA + n CoA + n CO2 + 2n NADP(+).. It carries out the reaction a fatty acyl-[ACP] + malonyl-[ACP] + H(+) = a 3-oxoacyl-[ACP] + holo-[ACP] + CO2. The catalysed reaction is a (3R)-hydroxyacyl-[ACP] + NADP(+) = a 3-oxoacyl-[ACP] + NADPH + H(+). Its function is as follows. Fatty acid synthetase catalyzes the formation of long-chain fatty acids from acetyl-CoA, malonyl-CoA and NADPH. The alpha subunit contains domains for: acyl carrier protein, 3-oxoacyl-[acyl-carrier-protein] reductase, and 3-oxoacyl-[acyl-carrier-protein] synthase. The polypeptide is Fatty acid synthase subunit alpha (FAS2) (Candida albicans (Yeast)).